A 267-amino-acid chain; its full sequence is Hydroxyethylthiazole kinase 2 (267 aa).

Methionine 41 is a substrate binding site. ATP contacts are provided by lysine 116 and threonine 166. Glycine 193 contacts substrate.

This sequence belongs to the Thz kinase family. The cofactor is Mg(2+).

The catalysed reaction is 5-(2-hydroxyethyl)-4-methylthiazole + ATP = 4-methyl-5-(2-phosphooxyethyl)-thiazole + ADP + H(+). The protein operates within cofactor biosynthesis; thiamine diphosphate biosynthesis; 4-methyl-5-(2-phosphoethyl)-thiazole from 5-(2-hydroxyethyl)-4-methylthiazole: step 1/1. In terms of biological role, catalyzes the phosphorylation of the hydroxyl group of 4-methyl-5-beta-hydroxyethylthiazole (THZ). The polypeptide is Hydroxyethylthiazole kinase 2 (Streptococcus pneumoniae (strain JJA)).